We begin with the raw amino-acid sequence, 82 residues long: Small ribosomal subunit protein bS16 (82 aa).

This sequence belongs to the bacterial ribosomal protein bS16 family.

In Desulfosudis oleivorans (strain DSM 6200 / JCM 39069 / Hxd3) (Desulfococcus oleovorans), this protein is Small ribosomal subunit protein bS16.